Here is a 947-residue protein sequence, read N- to C-terminus: Bifunctional glutamine synthetase adenylyltransferase/adenylyl-removing enzyme (947 aa).

Residues 1–440 (MTPLSSPLSQ…VFNELIGDDE (440 aa)) are adenylyl removase. An adenylyl transferase region spans residues 450-947 (SEPWREVWQD…ASWRKWLVAV (498 aa)).

Belongs to the GlnE family. The cofactor is Mg(2+).

The enzyme catalyses [glutamine synthetase]-O(4)-(5'-adenylyl)-L-tyrosine + phosphate = [glutamine synthetase]-L-tyrosine + ADP. The catalysed reaction is [glutamine synthetase]-L-tyrosine + ATP = [glutamine synthetase]-O(4)-(5'-adenylyl)-L-tyrosine + diphosphate. Its function is as follows. Involved in the regulation of glutamine synthetase GlnA, a key enzyme in the process to assimilate ammonia. When cellular nitrogen levels are high, the C-terminal adenylyl transferase (AT) inactivates GlnA by covalent transfer of an adenylyl group from ATP to specific tyrosine residue of GlnA, thus reducing its activity. Conversely, when nitrogen levels are low, the N-terminal adenylyl removase (AR) activates GlnA by removing the adenylyl group by phosphorolysis, increasing its activity. The regulatory region of GlnE binds the signal transduction protein PII (GlnB) which indicates the nitrogen status of the cell. The sequence is that of Bifunctional glutamine synthetase adenylyltransferase/adenylyl-removing enzyme from Salmonella paratyphi B (strain ATCC BAA-1250 / SPB7).